The chain runs to 163 residues: Phosphopantetheine adenylyltransferase (163 aa).

A substrate-binding site is contributed by threonine 10. ATP is bound by residues 10-11 (TF) and histidine 18. Residues lysine 42, leucine 74, and arginine 88 each coordinate substrate. Residues 89-91 (GLR), glutamate 99, and 124-130 (NSFISST) contribute to the ATP site.

The protein belongs to the bacterial CoaD family. In terms of assembly, homohexamer. It depends on Mg(2+) as a cofactor.

It localises to the cytoplasm. It catalyses the reaction (R)-4'-phosphopantetheine + ATP + H(+) = 3'-dephospho-CoA + diphosphate. The protein operates within cofactor biosynthesis; coenzyme A biosynthesis; CoA from (R)-pantothenate: step 4/5. Reversibly transfers an adenylyl group from ATP to 4'-phosphopantetheine, yielding dephospho-CoA (dPCoA) and pyrophosphate. The sequence is that of Phosphopantetheine adenylyltransferase from Shewanella sp. (strain MR-4).